Here is a 3343-residue protein sequence, read N- to C-terminus: Breast cancer type 2 susceptibility protein homolog (3343 aa).

The interval 1–40 is interaction with PALB2; sequence MTVEYKRRPTFWEIFKARCSTADLGPISLNWFEELFSEAP. A disordered region spans residues 40–60; the sequence is PPYNTEHPEESEYKPQGHEPQ. The segment covering 45 to 56 has biased composition (basic and acidic residues); sequence EHPEESEYKPQG. The residue at position 70 (S70) is a Phosphoserine. The disordered stretch occupies residues 348–381; sequence IEPRDSEPLDPSVTNQKPLYSQSGDISSEAGQCS. Over residues 359–381 the composition is skewed to polar residues; the sequence is SVTNQKPLYSQSGDISSEAGQCS. A phosphoserine mark is found at S475 and S736. The interval 622–982 is interaction with NPM1; it reads PDSSIKRSNL…DKWSEFLDPL (361 aa). BRCA2 repeat units lie at residues 984–1018, 1197–1231, 1405–1439, 1503–1537, 1645–1669, 1828–1845, 1939–1973, and 2019–2053; these read NHKL…DIEE, KEME…DIEN, MKEF…QETE, KEPT…ETQY, CYTG…WLRE, FITT…IFTD, PSRT…EIDG, and SSFV…EFDL. Residues 985–2050 form an interaction with RAD51 region; the sequence is HKLGGSFRTA…LHKVKGMLEE (1066 aa). 3 disordered regions span residues 2059-2138, 2297-2356, and 2377-2407; these read TLQH…VLGT, PFCS…SDKS, and DSKN…PQFN. At S2063 the chain carries Phosphoserine. 2 stretches are compositionally biased toward polar residues: residues 2083–2094 and 2101–2125; these read PEYSVSSKLQKT and SPSN…QLSQ. The interaction with HSF2BP stretch occupies residues 2233 to 2300; that stretch reads RKRGGMAGVA…EPVTCGPFCS (68 aa). Polar residues-rich tracts occupy residues 2307–2320 and 2332–2342; these read TQSP…QGLQ and GKSSSNPTVSA. Residues 2313-2475 are interaction with FANCD2; sequence TSPAQGLQSK…SPKQLYMYGV (163 aa). Residues 2344-2356 are compositionally biased toward basic and acidic residues; that stretch reads RSERTRHSVSDKS. Residues 2411–2762 form an interaction with SEM1 region; that stretch reads MSSLQNARDL…QRVYPLQWVE (352 aa). Positions 2612-2628 match the Nuclear export signal; masked by interaction with SEM1 motif; that stretch reads AAKTLVLCVSDIISLST. A disordered region spans residues 3114–3163; sequence DSPKWSTPNKDPTREPYPASTCSASDLASGGQLPRSSPTDQQSYRSPLSC. Over residues 3147–3163 the composition is skewed to polar residues; that stretch reads PRSSPTDQQSYRSPLSC. S3222 carries the phosphoserine; by CDK1 and CDK2 modification. 2 disordered regions span residues 3231-3255 and 3289-3343; these read PPRS…WSRA and VGGS…PDYS. Position 3250 is a phosphoserine (S3250). A compositionally biased stretch (polar residues) spans 3295–3310; it reads VFPSDSTRTEGPSAST. The span at 3318 to 3334 shows a compositional bias: basic and acidic residues; it reads SKRESLRDCRDDSDGKL.

Monomer and dimer. Interacts with RAD51; regulates RAD51 recruitment and function at sites of DNA repair. Interacts with SEM1, WDR16, USP11, DMC1, ROCK2 and NPM1. Interacts with both nonubiquitinated and monoubiquitinated FANCD2; this complex also includes XRCC3 and phosphorylated FANCG. Part of a BRCA complex containing BRCA1, BRCA2 and PALB2. Component of the homologous recombination repair (HR) complex composed of ERCC5/XPG, BRCA2, PALB2, DSS1 and RAD51. Within the complex, interacts with ERCC5/XPG and PALB2. Interacts directly with PALB2 which may serve as a scaffold for a HR complex containing PALB2, BRCA2, RAD51C, RAD51 and XRCC3. Interacts with BRCA1 only in the presence of PALB2 which serves as the bridging protein. Interacts with POLH; the interaction is direct. Interacts with the TREX-2 complex subunits PCID2 and SEM1. Interacts with HSF2BP and BRME1; the interaction with HSF2BP is direct and allows the formation of a ternary complex. The complex BRME1:HSF2BP:BRCA2 interacts with SPATA22, MEIOB and RAD51. Phosphorylated by ATM upon irradiation-induced DNA damage. Phosphorylation by CHEK1 and CHEK2 regulates interaction with RAD51. Phosphorylation at Ser-3222 by CDK1 and CDK2 is low in S phase when recombination is active, but increases as cells progress towards mitosis; this phosphorylation prevents homologous recombination-dependent repair during S phase and G2 by inhibiting RAD51 binding. In terms of processing, ubiquitinated in the absence of DNA damage; this does not lead to proteasomal degradation. In contrast, ubiquitination in response to DNA damage leads to proteasomal degradation. Highest expression in testis. Also expressed in spleen, skeletal muscle, thymus, mammary gland, heart, ovary, prostate, liver, lung, kidney and brain.

Its subcellular location is the nucleus. It localises to the cytoplasm. It is found in the cytoskeleton. The protein resides in the microtubule organizing center. The protein localises to the centrosome. Involved in double-strand break repair and/or homologous recombination. Binds RAD51 and potentiates recombinational DNA repair by promoting assembly of RAD51 onto single-stranded DNA (ssDNA). Acts by targeting RAD51 to ssDNA over double-stranded DNA, enabling RAD51 to displace replication protein-A (RPA) from ssDNA and stabilizing RAD51-ssDNA filaments by blocking ATP hydrolysis. Part of a PALB2-scaffolded HR complex containing RAD51C and which is thought to play a role in DNA repair by HR. May participate in S phase checkpoint activation. Binds selectively to ssDNA, and to ssDNA in tailed duplexes and replication fork structures. May play a role in the extension step after strand invasion at replication-dependent DNA double-strand breaks; together with PALB2 is involved in both POLH localization at collapsed replication forks and DNA polymerization activity. In concert with NPM1, regulates centrosome duplication. Interacts with the TREX-2 complex (transcription and export complex 2) subunits PCID2 and SEM1, and is required to prevent R-loop-associated DNA damage and thus transcription-associated genomic instability, independently of its known role in homologous recombination. In Rattus norvegicus (Rat), this protein is Breast cancer type 2 susceptibility protein homolog.